Here is a 546-residue protein sequence, read N- to C-terminus: MFS-type transporter GME11371 (546 aa).

Transmembrane regions (helical) follow at residues 39 to 59, 77 to 96, 107 to 127, 137 to 157, 167 to 187, 195 to 215, and 240 to 260; these read LTYL…DLTI, IGWY…SSWG, MFLL…AAPT, ITGI…AFAV, GGLA…GGVL, WCFY…FLFF, and FPGF…LLWG. N-linked (GlcNAc...) asparagine glycosylation is present at N267. A run of 7 helical transmembrane segments spans residues 270–290, 307–327, 349–369, 370–390, 402–422, 433–453, and 509–529; these read DVIG…VVEW, VVLF…VLVY, LPYI…ISAT, GYFT…AGLI, WIGY…PPIL, VAAT…FMVS, and ISFA…IFMP.

The protein belongs to the major facilitator superfamily.

Its subcellular location is the cell membrane. Its pathway is secondary metabolite biosynthesis. In terms of biological role, MFS-type transporter; part of the gene cluster that mediates the biosynthesis of dibenzodioxocinones such as pestalotiollide B, a novel class of inhibitors against cholesterol ester transfer protein (CEPT). essential for dibenzodioxocinones biosynthesis and may be involved in the secretion of the cluster products. This Pestalotiopsis microspora protein is MFS-type transporter GME11371.